The chain runs to 73 residues: Small ribosomal subunit protein bS18B (73 aa).

This sequence belongs to the bacterial ribosomal protein bS18 family. As to quaternary structure, part of the 30S ribosomal subunit. Forms a tight heterodimer with protein bS6.

Functionally, binds as a heterodimer with protein bS6 to the central domain of the 16S rRNA, where it helps stabilize the platform of the 30S subunit. This Frankia alni (strain DSM 45986 / CECT 9034 / ACN14a) protein is Small ribosomal subunit protein bS18B.